A 139-amino-acid polypeptide reads, in one-letter code: ATP synthase epsilon chain (139 aa).

It belongs to the ATPase epsilon chain family. F-type ATPases have 2 components, CF(1) - the catalytic core - and CF(0) - the membrane proton channel. CF(1) has five subunits: alpha(3), beta(3), gamma(1), delta(1), epsilon(1). CF(0) has three main subunits: a, b and c.

The protein localises to the cell inner membrane. Functionally, produces ATP from ADP in the presence of a proton gradient across the membrane. This chain is ATP synthase epsilon chain, found in Escherichia coli O139:H28 (strain E24377A / ETEC).